The following is a 906-amino-acid chain: E3 ubiquitin-protein ligase CBL (906 aa).

The interval 1–21 (MAGNVKKSSGAGGGSGSGGSG) is disordered. Residues 1-357 (MAGNVKKSSG…DLTGLCEPTP (357 aa)) form a sufficient for interaction with EPHB1 region. Gly residues predominate over residues 10–21 (GAGGGSGSGGSG). The segment at 47–175 (PPGTVDKKMV…KGIFPSGLFQ (129 aa)) is 4H. One can recognise a Cbl-PTB domain in the interval 47–351 (PPGTVDKKMV…GRNQNPDLTG (305 aa)). The segment at 176 to 248 (GDTFRITKAD…FEFDIFTRLF (73 aa)) is EF-hand-like. Ca(2+)-binding residues include D229, T231, N233, Y235, and E240. The tract at residues 249–351 (QPWSSLLRNW…GRNQNPDLTG (103 aa)) is SH2-like. R294 provides a ligand contact to 4-O-phospho-L-tyrosine. The tract at residues 352–380 (LCEPTPQDHIKVTQEQYELYCEMGSTFQL) is linker. Positions 358 to 906 (QDHIKVTQEQ…SISSPAHVAT (549 aa)) are required for ubiquitination of SPRED2. Y371 is subject to Phosphotyrosine; by INSR. Residues 381–420 (CKICAENDKDVKIEPCGHLMCTSCLTSWQESEGQGCPFCR) form an RING-type zinc finger. 3 disordered regions span residues 432-462 (DPFDPRGSGSLLRQGAEGAPSPNYDDDDDER), 477-498 (KVERPPSPFSMAPQASLPPVPP), and 519-667 (ASKA…IKPS). 3 positions are modified to phosphoserine: S439, S452, and S483. Positions 533 to 550 (LPVPPTLRDLPPPPPPDR) are enriched in pro residues. Residues S619, S642, S668, and S669 each carry the phosphoserine modification. Residues 639–653 (STFSLDTSMSMNSSP) show a composition bias toward polar residues. An interaction with CD2AP region spans residues 648–906 (SMNSSPLVGP…SISSPAHVAT (259 aa)). Y674 carries the phosphotyrosine modification. Residues 680–719 (PLPVPKLPPGEQCEGEEDTEYMTPSSRPLRPLDTSQSSRA) form a disordered region. A Phosphotyrosine; by ABL1 modification is found at Y700. At Y731 the chain carries Phosphotyrosine; by SRC. Disordered stretches follow at residues 743–781 (SITESSTFGEGNLAAAHANTGPEESENEDDGYDVPKPPV) and 799–854 (SFGW…ATAS). Residues 765–774 (EESENEDDGY) are compositionally biased toward acidic residues. At Y774 the chain carries Phosphotyrosine. A compositionally biased stretch (low complexity) spans 838-854 (GSCQQGSGPAASAATAS). The 40-residue stretch at 856–895 (QLSSEIENLMSQGYSYQDIQKALVIAQNNIEMAKNILREF) folds into the UBA domain. S900 bears the Phosphoserine mark.

In terms of assembly, forms homodimers; IFT20 promotes the formation of stable homodimers. Interacts (phosphorylated at Tyr-731) with PIK3R1. Associates with NCK via its SH3 domain. The phosphorylated C-terminus interacts with CD2AP via its second SH3 domain. Binds to UBE2L3. Interacts with adapters SLA, SLA2 and with the phosphorylated C-terminus of SH2B2. Interacts with EGFR, SYK and ZAP70 via the highly conserved Cbl-N region. Also interacts with SORBS1 and INPPL1/SHIP2. Interacts with phosphorylated LAT2. Interacts with CBLB. Interacts with ALK, AXL, BLK, FGR and FGFR2. Interacts with CSF1R, EPHB1, FLT1, KDR, PDGFRA and PDGFRB; regulates receptor degradation through ubiquitination. Interacts with HCK and LYN. Interacts with ATX2. Interacts with TEK/TIE2 (tyrosine phosphorylated). Interacts with SH3KBP1 and this interaction is inhibited in the presence of SHKBP1 or ARAP1. Interacts with SIGLEC10. Interacts with IFT20. Interacts with SPRY2; the interaction inhibits CBL-mediated ubiquitination of EGFR. Interacts (phosphorylated at Tyr-774) with tensin TNS4 (via SH2 domain); the interaction is enhanced in the presence of EGF and reduces interaction of CBL with EGFR. Interacts with EGFR; the interaction is reduced in the presence of TNS4. Interacts with CD5. Interacts with CD93. (Microbial infection) Interacts with M.tuberculosis LpqN, which influences the balance between intrinsic antibacterial and antiviral defense. In terms of processing, phosphorylated on tyrosine residues by ALK, EGFR, SYK, FYN and ZAP70. Phosphorylated on tyrosine residues in response to FLT1 and KIT signaling. Phosphorylated on tyrosine residues by INSR and FGR. Phosphorylated on several tyrosine residues by constitutively activated FGFR3. Not phosphorylated at Tyr-731 by FGFR3. Phosphorylated on tyrosine residues by activated CSF1R, PDGFRA and PDGFRB. Phosphorylated on tyrosine residues by HCK. Post-translationally, ubiquitinated, leading to its degradation via the proteasome. Ubiquitination is negatively regulated by IFT20.

It is found in the cytoplasm. Its subcellular location is the cell membrane. The protein resides in the cell projection. The protein localises to the cilium. It localises to the golgi apparatus. It carries out the reaction S-ubiquitinyl-[E2 ubiquitin-conjugating enzyme]-L-cysteine + [acceptor protein]-L-lysine = [E2 ubiquitin-conjugating enzyme]-L-cysteine + N(6)-ubiquitinyl-[acceptor protein]-L-lysine.. Its pathway is protein modification; protein ubiquitination. In terms of biological role, E3 ubiquitin-protein ligase that acts as a negative regulator of many signaling pathways by mediating ubiquitination of cell surface receptors. Accepts ubiquitin from specific E2 ubiquitin-conjugating enzymes, and then transfers it to substrates promoting their degradation by the proteasome. Recognizes activated receptor tyrosine kinases, including KIT, FLT1, FGFR1, FGFR2, PDGFRA, PDGFRB, CSF1R, EPHA8 and KDR and mediates their ubiquitination to terminate signaling. Recognizes membrane-bound HCK, SRC and other kinases of the SRC family and mediates their ubiquitination and degradation. Ubiquitinates EGFR and SPRY2. Ubiquitinates NECTIN1 following association between NECTIN1 and herpes simplex virus 1/HHV-1 envelope glycoprotein D, leading to NECTIN1 removal from cell surface. Participates in signal transduction in hematopoietic cells. Plays an important role in the regulation of osteoblast differentiation and apoptosis. Essential for osteoclastic bone resorption. The 'Tyr-731' phosphorylated form induces the activation and recruitment of phosphatidylinositol 3-kinase to the cell membrane in a signaling pathway that is critical for osteoclast function. May be functionally coupled with the E2 ubiquitin-protein ligase UB2D3. In association with CBLB, required for proper feedback inhibition of ciliary platelet-derived growth factor receptor-alpha (PDGFRA) signaling pathway via ubiquitination and internalization of PDGFRA. The protein is E3 ubiquitin-protein ligase CBL (CBL) of Homo sapiens (Human).